Reading from the N-terminus, the 194-residue chain is Dof zinc finger protein DOF4.2 (194 aa).

A Dof-type zinc finger spans residues 21 to 75 (RVCPRCYSDQTRFSYFNNNKKSQPRYKCKNCCRCWTHGGVLRNIPVTGICDKSNL). Zn(2+)-binding residues include C23, C26, C48, and C51.

Its subcellular location is the nucleus. Transcription factor that binds specifically to a 5'-AA[AG]G-3' consensus core sequence. The chain is Dof zinc finger protein DOF4.2 (DOF4.2) from Arabidopsis thaliana (Mouse-ear cress).